Consider the following 355-residue polypeptide: tRNA-specific 2-thiouridylase MnmA (355 aa).

Residues 6–13 and Leu-33 contribute to the ATP site; that span reads LLSGGVDS. Cys-100 acts as the Nucleophile in catalysis. An intrachain disulfide couples Cys-100 to Cys-195. Residue Gly-123 participates in ATP binding. Residues 145 to 147 are interaction with tRNA; it reads KDQ. Cys-195 (cysteine persulfide intermediate) is an active-site residue.

The protein belongs to the MnmA/TRMU family.

The protein localises to the cytoplasm. It carries out the reaction S-sulfanyl-L-cysteinyl-[protein] + uridine(34) in tRNA + AH2 + ATP = 2-thiouridine(34) in tRNA + L-cysteinyl-[protein] + A + AMP + diphosphate + H(+). Catalyzes the 2-thiolation of uridine at the wobble position (U34) of tRNA, leading to the formation of s(2)U34. The chain is tRNA-specific 2-thiouridylase MnmA from Borreliella burgdorferi (strain ATCC 35210 / DSM 4680 / CIP 102532 / B31) (Borrelia burgdorferi).